The sequence spans 198 residues: Leucyl/phenylalanyl-tRNA--protein transferase (198 aa).

The protein belongs to the L/F-transferase family.

Its subcellular location is the cytoplasm. It carries out the reaction N-terminal L-lysyl-[protein] + L-leucyl-tRNA(Leu) = N-terminal L-leucyl-L-lysyl-[protein] + tRNA(Leu) + H(+). The catalysed reaction is N-terminal L-arginyl-[protein] + L-leucyl-tRNA(Leu) = N-terminal L-leucyl-L-arginyl-[protein] + tRNA(Leu) + H(+). The enzyme catalyses L-phenylalanyl-tRNA(Phe) + an N-terminal L-alpha-aminoacyl-[protein] = an N-terminal L-phenylalanyl-L-alpha-aminoacyl-[protein] + tRNA(Phe). Functions in the N-end rule pathway of protein degradation where it conjugates Leu, Phe and, less efficiently, Met from aminoacyl-tRNAs to the N-termini of proteins containing an N-terminal arginine or lysine. The chain is Leucyl/phenylalanyl-tRNA--protein transferase from Synechocystis sp. (strain ATCC 27184 / PCC 6803 / Kazusa).